Consider the following 144-residue polypeptide: Large ribosomal subunit protein uL11 (144 aa).

It belongs to the universal ribosomal protein uL11 family. Part of the ribosomal stalk of the 50S ribosomal subunit. Interacts with L10 and the large rRNA to form the base of the stalk. L10 forms an elongated spine to which L12 dimers bind in a sequential fashion forming a multimeric L10(L12)X complex. One or more lysine residues are methylated.

Functionally, forms part of the ribosomal stalk which helps the ribosome interact with GTP-bound translation factors. In Francisella tularensis subsp. mediasiatica (strain FSC147), this protein is Large ribosomal subunit protein uL11.